The sequence spans 374 residues: Putative cullin-like protein 2 (374 aa).

It belongs to the cullin family.

The polypeptide is Putative cullin-like protein 2 (Arabidopsis thaliana (Mouse-ear cress)).